We begin with the raw amino-acid sequence, 379 residues long: Putative FBD-associated F-box protein At5g38570 (379 aa).

Positions 1–47 (MDNINGLPDDLLVKILSFVPTYVAVSTCVLSKRWEFLWMWLPNLEFV) constitute an F-box domain. Positions 295–345 (CWNQPSSVLECLLSSLKILNWSAYFGRPQDRDIAVYILKNACHLKTATFLT) constitute an FBD domain.

The chain is Putative FBD-associated F-box protein At5g38570 from Arabidopsis thaliana (Mouse-ear cress).